The primary structure comprises 507 residues: Subtilisin-like protease 1 (507 aa).

The first 19 residues, 1–19 (MGVFRFISISLAAVSAANA), serve as a signal peptide directing secretion. A propeptide spanning residues 20–116 (AQILSMPHAQ…VEPDTIISVN (97 aa)) is cleaved from the precursor. The 80-residue stretch at 34-113 (SYIVMMKDDT…VMFVEPDTII (80 aa)) folds into the Inhibitor I9 domain. One can recognise a Peptidase S8 domain in the interval 126-400 (SWGLARISNS…NVLISNGGAK (275 aa)). Residues aspartate 158 and histidine 190 each act as charge relay system in the active site. The disordered stretch occupies residues 175 to 198 (GSNQVNDGDDRDGSGHGTHTSGTM). A glycan (N-linked (GlcNAc...) asparagine) is linked at asparagine 251. Polar residues predominate over residues 282 to 294 (NENQDARSSSPAS). The segment at 282-312 (NENQDARSSSPASEPSVCTVGSSAEDDSRSS) is disordered. Serine 345 (charge relay system) is an active-site residue. Positions 378-394 (SSSITDVGPGTPTNVLI) are enriched in polar residues. A disordered region spans residues 378–486 (SSSITDVGPG…YPGGDNFDFD (109 aa)). 2 stretches are compositionally biased toward pro residues: residues 405–428 (KPAP…PSQP) and 438–449 (EPFPGEPFPGEP). Residues 450–461 (FPGESSPGESAP) show a composition bias toward low complexity. The segment covering 462–476 (APAPMPPSPQHPHTP) has biased composition (pro residues).

Belongs to the peptidase S8 family.

The protein resides in the secreted. Functionally, secreted subtilisin-like serine protease with keratinolytic activity that contributes to pathogenicity. The protein is Subtilisin-like protease 1 (SUB1) of Trichophyton tonsurans (Scalp ringworm fungus).